The primary structure comprises 307 residues: Ribosomal RNA small subunit methyltransferase H (307 aa).

S-adenosyl-L-methionine contacts are provided by residues 32 to 34, aspartate 51, isoleucine 82, aspartate 99, and glutamine 106; that span reads AGH.

The protein belongs to the methyltransferase superfamily. RsmH family.

The protein resides in the cytoplasm. It carries out the reaction cytidine(1402) in 16S rRNA + S-adenosyl-L-methionine = N(4)-methylcytidine(1402) in 16S rRNA + S-adenosyl-L-homocysteine + H(+). In terms of biological role, specifically methylates the N4 position of cytidine in position 1402 (C1402) of 16S rRNA. The chain is Ribosomal RNA small subunit methyltransferase H from Campylobacter concisus (strain 13826).